A 159-amino-acid polypeptide reads, in one-letter code: Endoribonuclease YbeY (159 aa).

Residues histidine 125, histidine 129, and histidine 135 each contribute to the Zn(2+) site.

Belongs to the endoribonuclease YbeY family. Zn(2+) serves as cofactor.

It localises to the cytoplasm. Its function is as follows. Single strand-specific metallo-endoribonuclease involved in late-stage 70S ribosome quality control and in maturation of the 3' terminus of the 16S rRNA. The protein is Endoribonuclease YbeY of Brevibacillus brevis (strain 47 / JCM 6285 / NBRC 100599).